We begin with the raw amino-acid sequence, 111 residues long: Cell cycle protein GpsB (111 aa).

A coiled-coil region spans residues 34–72; that stretch reads LDMIIKDYEVFHKELEQLQQQNARLKRELEEQKLAAAQA.

The protein belongs to the GpsB family. In terms of assembly, forms polymers through the coiled coil domains. Interacts with PBP1, MreC and EzrA.

The protein localises to the cytoplasm. Its function is as follows. Divisome component that associates with the complex late in its assembly, after the Z-ring is formed, and is dependent on DivIC and PBP2B for its recruitment to the divisome. Together with EzrA, is a key component of the system that regulates PBP1 localization during cell cycle progression. Its main role could be the removal of PBP1 from the cell pole after pole maturation is completed. Also contributes to the recruitment of PBP1 to the division complex. Not essential for septum formation. This Bacillus cytotoxicus (strain DSM 22905 / CIP 110041 / 391-98 / NVH 391-98) protein is Cell cycle protein GpsB.